The primary structure comprises 564 residues: Rhotekin (564 aa).

R14 is modified (omega-N-methylarginine). The region spanning 17 to 98 (ALEMEFKRGR…LQRRKEAQVL (82 aa)) is the REM-1 domain. Phosphoserine is present on residues S30 and S106. The residue at position 230 (R230) is an Asymmetric dimethylarginine. S232 is modified (phosphoserine). In terms of domain architecture, PH spans 309–416 (QPTASGALRV…WMEALWQLFF (108 aa)). Residues 518-564 (TFSLDAAPADHSLGPSRSVAPLPPQRSPKSRGFYSKSQLGPWLQSPV) form a disordered region. S520, S529, and S544 each carry phosphoserine.

As to quaternary structure, interacts via its C-terminal region with the TAX1BP3 PDZ domain. This interaction facilitates Rho-mediated activation of the c-Fos serum response element (SRE). Interacts with SEPT9. Specifically binds to GTP-bound RHOA, RHOB and RHOC and inhibits their GTPase activity. As to expression, abundantly expressed in brain and kidney. Weakly expressed in lung, testis, skeletal muscle, heart and thymus.

Mediates Rho signaling to activate NF-kappa-B and may confer increased resistance to apoptosis to cells in gastric tumorigenesis. May play a novel role in the organization of septin structures. This Mus musculus (Mouse) protein is Rhotekin.